We begin with the raw amino-acid sequence, 227 residues long: dTTP/UTP pyrophosphatase (227 aa).

Aspartate 98 serves as the catalytic Proton acceptor.

The protein belongs to the Maf family. YhdE subfamily. The cofactor is a divalent metal cation.

The protein localises to the cytoplasm. The enzyme catalyses dTTP + H2O = dTMP + diphosphate + H(+). It catalyses the reaction UTP + H2O = UMP + diphosphate + H(+). Functionally, nucleoside triphosphate pyrophosphatase that hydrolyzes dTTP and UTP. May have a dual role in cell division arrest and in preventing the incorporation of modified nucleotides into cellular nucleic acids. The polypeptide is dTTP/UTP pyrophosphatase (Bartonella quintana (strain Toulouse) (Rochalimaea quintana)).